The sequence spans 271 residues: 4-hydroxy-tetrahydrodipicolinate reductase (271 aa).

Residues 11 to 16 (GGSGRM) and E37 contribute to the NAD(+) site. NADP(+) is bound at residue R38. NAD(+)-binding positions include 101-103 (GTT) and 125-128 (APNM). The active-site Proton donor/acceptor is H158. H159 provides a ligand contact to (S)-2,3,4,5-tetrahydrodipicolinate. K162 (proton donor) is an active-site residue. Residue 168 to 169 (GT) coordinates (S)-2,3,4,5-tetrahydrodipicolinate.

It belongs to the DapB family.

It localises to the cytoplasm. It catalyses the reaction (S)-2,3,4,5-tetrahydrodipicolinate + NAD(+) + H2O = (2S,4S)-4-hydroxy-2,3,4,5-tetrahydrodipicolinate + NADH + H(+). It carries out the reaction (S)-2,3,4,5-tetrahydrodipicolinate + NADP(+) + H2O = (2S,4S)-4-hydroxy-2,3,4,5-tetrahydrodipicolinate + NADPH + H(+). Its pathway is amino-acid biosynthesis; L-lysine biosynthesis via DAP pathway; (S)-tetrahydrodipicolinate from L-aspartate: step 4/4. Functionally, catalyzes the conversion of 4-hydroxy-tetrahydrodipicolinate (HTPA) to tetrahydrodipicolinate. The chain is 4-hydroxy-tetrahydrodipicolinate reductase from Shewanella halifaxensis (strain HAW-EB4).